The following is a 197-amino-acid chain: Ribonuclease HII (197 aa).

Positions 14–197 constitute an RNase H type-2 domain; sequence GIIAGVDEVG…RKNFAPIRIL (184 aa). Residues Asp-20, Glu-21, and Asp-112 each coordinate a divalent metal cation.

Belongs to the RNase HII family. The cofactor is Mn(2+). It depends on Mg(2+) as a cofactor.

It localises to the cytoplasm. It carries out the reaction Endonucleolytic cleavage to 5'-phosphomonoester.. In terms of biological role, endonuclease that specifically degrades the RNA of RNA-DNA hybrids. The sequence is that of Ribonuclease HII from Wolbachia pipientis subsp. Culex pipiens (strain wPip).